An 88-amino-acid polypeptide reads, in one-letter code: Small ribosomal subunit protein uS15 (88 aa).

Belongs to the universal ribosomal protein uS15 family. In terms of assembly, part of the 30S ribosomal subunit. Forms a bridge to the 50S subunit in the 70S ribosome, contacting the 23S rRNA.

Functionally, one of the primary rRNA binding proteins, it binds directly to 16S rRNA where it helps nucleate assembly of the platform of the 30S subunit by binding and bridging several RNA helices of the 16S rRNA. Its function is as follows. Forms an intersubunit bridge (bridge B4) with the 23S rRNA of the 50S subunit in the ribosome. The protein is Small ribosomal subunit protein uS15 of Acidovorax sp. (strain JS42).